Reading from the N-terminus, the 71-residue chain is Large ribosomal subunit protein uL29 (71 aa).

This sequence belongs to the universal ribosomal protein uL29 family.

In Rickettsia akari (strain Hartford), this protein is Large ribosomal subunit protein uL29.